The following is an 88-amino-acid chain: uncharacterized protein (88 aa).

2 consecutive transmembrane segments (helical) span residues 13–33 (FLAF…GWGP) and 62–82 (WFNI…ITGI).

The protein resides in the cell membrane. This is an uncharacterized protein from Bacillus subtilis (strain 168).